Reading from the N-terminus, the 690-residue chain is MSETNTGTPVVTFEGSPYRLHQPFPPAGDQPEAIRQLVEGLDDGLSFQTLLGVTGSGKTYTMANVIARTGRPALVLAPNKTLAAQLYSEFKEFFPENSVEYFVSYYDYYQPEAYVPSRDLFIEKDSSINDHIEQMRLSATKSLIERRDVVIVATVSCIYGIGDRDEYHNMILTMRVGDKLDQRAIVKRLTDMQYERNEMDFHRGTFRVRGDIIDIFPAEHAEHAIRISLFDDEVEGMQFFDPLTGHLLHKALRFTVFPASHYVTPRATVLRAVEAIKDELRERIDFFTRNNKLVEAQRIEQRTRFDLEMLDQIGFCKGIENYSRHFSGRKAGESPPTLIDYLPPDALMFIDESHVSIGQVGGMYKGDRSRKENLVDYGFRLPSALDNRPLQFNEFEAHMRQTIFVSATPADYEQQHAGQVVEQVARPTGLIDPEVIVRPASTQVDDLLAEIGKRIAVGERVLVTTLTKRMSEDLTDFLADNGIKVRYLHSDIDTVERVEIIRDLRLGEFDVLVGINLLREGLDIPEVSLVAILDADKEGFLRSERSLIQTIGRAARHIHGTAILYADTVTQSMQRAIAETGRRREKQIAFNLEHGITPRGVSKKIKDIIDGVYDAGSAQTELKAAQQRAAYDAMDEKAVAREIKRLEKSMMECAKNLEFEKAAAARDDLFRLRERVFGAAQHDLDGDGTK.

One can recognise a Helicase ATP-binding domain in the interval Glu39–Glu422. ATP is bound at residue Gly52–Thr59. Positions Tyr105–Ile128 match the Beta-hairpin motif. Residues Gln443 to Ile596 enclose the Helicase C-terminal domain. The 36-residue stretch at Ala640–Arg675 folds into the UVR domain.

The protein belongs to the UvrB family. In terms of assembly, forms a heterotetramer with UvrA during the search for lesions. Interacts with UvrC in an incision complex.

It localises to the cytoplasm. In terms of biological role, the UvrABC repair system catalyzes the recognition and processing of DNA lesions. A damage recognition complex composed of 2 UvrA and 2 UvrB subunits scans DNA for abnormalities. Upon binding of the UvrA(2)B(2) complex to a putative damaged site, the DNA wraps around one UvrB monomer. DNA wrap is dependent on ATP binding by UvrB and probably causes local melting of the DNA helix, facilitating insertion of UvrB beta-hairpin between the DNA strands. Then UvrB probes one DNA strand for the presence of a lesion. If a lesion is found the UvrA subunits dissociate and the UvrB-DNA preincision complex is formed. This complex is subsequently bound by UvrC and the second UvrB is released. If no lesion is found, the DNA wraps around the other UvrB subunit that will check the other stand for damage. The sequence is that of UvrABC system protein B from Dechloromonas aromatica (strain RCB).